The primary structure comprises 79 residues: ATP synthase subunit c (79 aa).

2 helical membrane-spanning segments follow: residues 11-31 (IAVAIMIGLAAIGAAIGIGIL) and 53-73 (FFVVMGLVDAIPMIAVGLGLY).

The protein belongs to the ATPase C chain family. F-type ATPases have 2 components, F(1) - the catalytic core - and F(0) - the membrane proton channel. F(1) has five subunits: alpha(3), beta(3), gamma(1), delta(1), epsilon(1). F(0) has three main subunits: a(1), b(2) and c(10-14). The alpha and beta chains form an alternating ring which encloses part of the gamma chain. F(1) is attached to F(0) by a central stalk formed by the gamma and epsilon chains, while a peripheral stalk is formed by the delta and b chains.

It is found in the cell membrane. Functionally, f(1)F(0) ATP synthase produces ATP from ADP in the presence of a proton or sodium gradient. F-type ATPases consist of two structural domains, F(1) containing the extramembraneous catalytic core and F(0) containing the membrane proton channel, linked together by a central stalk and a peripheral stalk. During catalysis, ATP synthesis in the catalytic domain of F(1) is coupled via a rotary mechanism of the central stalk subunits to proton translocation. In terms of biological role, key component of the F(0) channel; it plays a direct role in translocation across the membrane. A homomeric c-ring of between 10-14 subunits forms the central stalk rotor element with the F(1) delta and epsilon subunits. The polypeptide is ATP synthase subunit c (Buchnera aphidicola subsp. Schizaphis graminum (strain Sg)).